Consider the following 283-residue polypeptide: NAD kinase (283 aa).

The active-site Proton acceptor is the Asp-69. NAD(+) contacts are provided by residues 69 to 70, 138 to 139, Lys-166, Asp-168, Leu-176, 179 to 184, and Gln-235; these read DG, NE, and TAYNLS.

It belongs to the NAD kinase family. A divalent metal cation is required as a cofactor.

The protein resides in the cytoplasm. The enzyme catalyses NAD(+) + ATP = ADP + NADP(+) + H(+). In terms of biological role, involved in the regulation of the intracellular balance of NAD and NADP, and is a key enzyme in the biosynthesis of NADP. Catalyzes specifically the phosphorylation on 2'-hydroxyl of the adenosine moiety of NAD to yield NADP. In Helicobacter acinonychis (strain Sheeba), this protein is NAD kinase.